Here is a 452-residue protein sequence, read N- to C-terminus: Bis(5'-adenosyl)-triphosphatase ENPP4 (452 aa).

The signal sequence occupies residues 1 to 15 (MKLLVILLFSGLITG). Topologically, residues 16–406 (FRSDSSSSLP…DQWCINLPEA (391 aa)) are extracellular. Residues D34 and T70 each coordinate Zn(2+). Residue T70 is the AMP-threonine intermediate of the active site. N91 and Y154 together coordinate substrate. N-linked (GlcNAc...) asparagine glycans are attached at residues N155 and N166. Zn(2+)-binding residues include D189, H193, D237, and H238. D189 is a binding site for substrate. A disulfide bond links C254 and C287. An N-linked (GlcNAc...) asparagine glycan is attached at N276. A Zn(2+)-binding site is contributed by H335. A disulfide bond links C393 and C400. A helical transmembrane segment spans residues 407–427 (IAIVIGSLLVLTMLTCLIIIM). Residues 428-452 (QNRLSVPRPFSRLQLQEDDDDPLIG) are Cytoplasmic-facing.

The protein belongs to the nucleotide pyrophosphatase/phosphodiesterase family. The cofactor is Zn(2+).

It is found in the cell membrane. The catalysed reaction is P(1),P(3)-bis(5'-adenosyl) triphosphate + H2O = AMP + ADP + 2 H(+). In terms of biological role, hydrolyzes extracellular Ap3A into AMP and ADP, and Ap4A into AMP and ATP. Ap3A and Ap4A are diadenosine polyphosphates thought to induce proliferation of vascular smooth muscle cells. Acts as a procoagulant, mediating platelet aggregation at the site of nascent thrombus via release of ADP from Ap3A and activation of ADP receptors. The chain is Bis(5'-adenosyl)-triphosphatase ENPP4 (ENPP4) from Pongo abelii (Sumatran orangutan).